The sequence spans 670 residues: MSLADLTKTNIDEQFSSVALENNRRSAECKRSPGTGDFSRNSNASAKSVDYSRSQCSCGSLSSQYDYSEDFLCDCSEKAINRNYLKQPVVKEKEKKKYNVSKISQSKGQKEISVGKKHTWNASLFNSQIHMIAQRRDAMAHRILSARLHKIKGLKNELADMHHKLEAILTENQFLKQLQLRHLKAIGKYENSQNNLPQIMAKHQNEVKNLRQLLRKSQEKERTVSRKLRETDSQLLKTKDTLQALQKLSEDKNLAEREELTHKLSIITTKMEANDKKIQSLEKQLRLNSRAFSRQLAIETRKTLAAQTATKTLQVEVKHLQQKLKEKDRELEIKNIYSHRILKNLHDTEDYPKVSSTKSVQADRKSLPFTSMRHQGTQKSDVAPLTTKGKKATGNMDRKEKSTEINREIPHCVNKLPKQEDSKTKYEDLSREEKHLEVQVLLENTGRQKDKKEDQEKKTIFVKEEQELPPKIIEVIHPERESTQEDVLVREKFKRSMQRNGMDDTPDKCTAPYTKGPLRQRRHYSFTEATENLHHGLPASGGPANAGNTKYSHSTSKHLSNREEMELEHSDSGYEPSFGKSSRIKAKDTTFRDKKSSLMEELFGSGYVLKTDQSSPGVAKGSEEPLQSKESHPLPPSQASASNAFGDSKVTVVNSIKPSSPTEGKRKIII.

The segment at 24 to 44 (RRSAECKRSPGTGDFSRNSNA) is disordered. Coiled coils occupy residues 148 to 259 (LHKI…EREE) and 305 to 336 (AAQT…IKNI). The disordered stretch occupies residues 351–402 (YPKVSSTKSVQADRKSLPFTSMRHQGTQKSDVAPLTTKGKKATGNMDRKEKS). Positions 368-380 (PFTSMRHQGTQKS) are enriched in polar residues. Residues 420–440 (EDSKTKYEDLSREEKHLEVQV) adopt a coiled-coil conformation. 3 disordered regions span residues 495–520 (RSMQ…PLRQ), 533–594 (LHHG…FRDK), and 606–647 (GYVL…AFGD). Residues 546–558 (AGNTKYSHSTSKH) are compositionally biased toward polar residues. Basic and acidic residues-rich tracts occupy residues 560 to 572 (SNRE…HSDS), 585 to 594 (KAKDTTFRDK), and 621 to 632 (GSEEPLQSKESH). Residues 637-647 (SQASASNAFGD) show a composition bias toward polar residues.

It belongs to the LCA5 family.

The chain is Lebercilin-like protein from Papio anubis (Olive baboon).